The following is a 580-amino-acid chain: Rap guanine nucleotide exchange factor 5 (580 aa).

Positions 68–201 (DRYVVVSGTP…ELKEFQKILG (134 aa)) constitute an N-terminal Ras-GEF domain. A Ras-GEF domain is found at 345–579 (NTWDLALELM…FELSHRIEPR (235 aa)).

Widely expressed with highest levels in brain.

The protein resides in the nucleus. Its function is as follows. Guanine nucleotide exchange factor (GEF) for RAP1A, RAP2A and MRAS/M-Ras-GTP. Its association with MRAS inhibits Rap1 activation. This is Rap guanine nucleotide exchange factor 5 (RAPGEF5) from Homo sapiens (Human).